A 278-amino-acid chain; its full sequence is Large ribosomal subunit protein uL2 (278 aa).

Disordered regions lie at residues Met-1–His-58 and Val-224–Arg-278. A compositionally biased stretch (basic and acidic residues) spans Glu-23 to Leu-33. Residues Leu-37–His-58 are compositionally biased toward basic residues. The segment covering Pro-253 to Ile-268 has biased composition (basic and acidic residues). Residues Val-269–Arg-278 are compositionally biased toward basic residues.

The protein belongs to the universal ribosomal protein uL2 family. Part of the 50S ribosomal subunit. Forms a bridge to the 30S subunit in the 70S ribosome.

One of the primary rRNA binding proteins. Required for association of the 30S and 50S subunits to form the 70S ribosome, for tRNA binding and peptide bond formation. It has been suggested to have peptidyltransferase activity; this is somewhat controversial. Makes several contacts with the 16S rRNA in the 70S ribosome. This is Large ribosomal subunit protein uL2 from Mycolicibacterium vanbaalenii (strain DSM 7251 / JCM 13017 / BCRC 16820 / KCTC 9966 / NRRL B-24157 / PYR-1) (Mycobacterium vanbaalenii).